Consider the following 541-residue polypeptide: Tyrosine-protein kinase Yes (541 aa).

The span at 1–10 shows a compositional bias: basic and acidic residues; the sequence is MGCIKSKENK. The tract at residues 1-29 is disordered; the sequence is MGCIKSKENKSPAIKYTPENPTEPVNTSA. Glycine 2 is lipidated: N-myristoyl glycine. The S-palmitoyl cysteine; in membrane form moiety is linked to residue cysteine 3. Over residues 19–29 the composition is skewed to polar residues; that stretch reads ENPTEPVNTSA. At tyrosine 32 the chain carries Phosphotyrosine. Residues 89-150 form the SH3 domain; the sequence is GGVTIFVALY…PSNYVAPADS (62 aa). Residues 156 to 253 form the SH2 domain; sequence WYFGKMGRKD…GLCHKLTTVC (98 aa). One can recognise a Protein kinase domain in the interval 275–528; that stretch reads LRLEVKLGQG…YIQSFLEDYF (254 aa). ATP contacts are provided by residues 281-289 and lysine 303; that span reads LGQGCFGEV. Phosphotyrosine is present on residues tyrosine 334 and tyrosine 343. Residue aspartate 394 is the Proton acceptor of the active site. Tyrosine 424 is subject to Phosphotyrosine; by autocatalysis. The residue at position 535 (tyrosine 535) is a Phosphotyrosine.

Interacts with YAP1 and CSF1R. Interacts with FASLG. Interacts with CTNND1; this interaction allows YES1-mediated activation of FYN and FER and subsequent phosphorylation of CTNND1. Interacts with IL6ST/gp130. Interacts with SCRIB, when YES1 is in a closed conformation; the interaction facilitates YES1 autophosphorylation. Post-translationally, phosphorylated. Phosphorylation by CSK on the C-terminal tail maintains the enzyme in an inactive state. Autophosphorylation at Tyr-424 maintains enzyme activity by blocking CSK-mediated inhibition. In terms of processing, palmitoylation at Cys-3 promotes membrane localization.

The protein localises to the cell membrane. Its subcellular location is the cytoplasm. It is found in the cytoskeleton. The protein resides in the microtubule organizing center. It localises to the centrosome. The protein localises to the cytosol. Its subcellular location is the cell junction. The enzyme catalyses L-tyrosyl-[protein] + ATP = O-phospho-L-tyrosyl-[protein] + ADP + H(+). Its function is as follows. Non-receptor protein tyrosine kinase that is involved in the regulation of cell growth and survival, apoptosis, cell-cell adhesion, cytoskeleton remodeling, and differentiation. Stimulation by receptor tyrosine kinases (RTKs) including EGFR, PDGFR, CSF1R and FGFR leads to recruitment of YES1 to the phosphorylated receptor, and activation and phosphorylation of downstream substrates. Upon EGFR activation, promotes the phosphorylation of PARD3 to favor epithelial tight junction assembly. Participates in the phosphorylation of specific junctional components such as CTNND1 by stimulating the FYN and FER tyrosine kinases at cell-cell contacts. Upon T-cell stimulation by CXCL12, phosphorylates collapsin response mediator protein 2/DPYSL2 and induces T-cell migration. Participates in CD95L/FASLG signaling pathway and mediates AKT-mediated cell migration. Plays a role in cell cycle progression by phosphorylating the cyclin dependent kinase 4/CDK4 thus regulating the G1 phase. Also involved in G2/M progression and cytokinesis. Catalyzes phosphorylation of organic cation transporter OCT2 which induces its transport activity. This is Tyrosine-protein kinase Yes (Yes1) from Rattus norvegicus (Rat).